The chain runs to 532 residues: BEL1-like homeodomain protein 6 (532 aa).

The interval 144 to 160 (SKYLKAAQQLLDEAVNV) is SR/KY domain. The tract at residues 170 to 203 (EGDKNNENPQEPNQSTQDSSTNPPADISQSERQE) is disordered. A compositionally biased stretch (polar residues) spans 176-197 (ENPQEPNQSTQDSSTNPPADIS). Residues 200 to 271 (ERQEMQSKLT…SLRDAISGQI (72 aa)) are BELL domain. The homeobox DNA-binding region spans 314–376 (AWRPQRGLPE…NARVRLWKPM (63 aa)). The interval 385 to 434 (FTENDSNSSSENTPKMSEIGPVAADDEDRAREFSQDQTKPDHGHGYGEET) is disordered. The span at 412–434 (DRAREFSQDQTKPDHGHGYGEET) shows a compositional bias: basic and acidic residues.

This sequence belongs to the TALE/BELL homeobox family. May form heterodimeric complexes with TALE/KNOX proteins. Interacts with OFP2, OFP4, and OFP5.

Its subcellular location is the nucleus. This chain is BEL1-like homeodomain protein 6 (BLH6), found in Arabidopsis thaliana (Mouse-ear cress).